A 478-amino-acid chain; its full sequence is DNA-directed RNA polymerase subunit alpha (478 aa).

An alpha N-terminal domain (alpha-NTD) region spans residues 1-341 (MNKKIQDFFL…LDCMRLLNYE (341 aa)). Positions 365–478 (RFYNSREDKT…KLGSRNEKNL (114 aa)) are alpha C-terminal domain (alpha-CTD).

It belongs to the RNA polymerase alpha chain family. In plastids the minimal PEP RNA polymerase catalytic core is composed of four subunits: alpha, beta, beta', and beta''. When a (nuclear-encoded) sigma factor is associated with the core the holoenzyme is formed, which can initiate transcription.

It localises to the plastid. The protein resides in the chloroplast. The enzyme catalyses RNA(n) + a ribonucleoside 5'-triphosphate = RNA(n+1) + diphosphate. DNA-dependent RNA polymerase catalyzes the transcription of DNA into RNA using the four ribonucleoside triphosphates as substrates. The sequence is that of DNA-directed RNA polymerase subunit alpha (rpoA) from Tetradesmus obliquus (Green alga).